Here is a 1150-residue protein sequence, read N- to C-terminus: Rho-type GTPase-activating protein 1 (1150 aa).

The span at 1 to 10 shows a compositional bias: basic and acidic residues; sequence MSQRDAKKDG. The disordered stretch occupies residues 1 to 78; that stretch reads MSQRDAKKDG…AESRKALPNQ (78 aa). Over residues 40–62 the composition is skewed to polar residues; sequence TTKNFPHSRHTSTVAGTEGGSSL. 3 consecutive LIM zinc-binding domains span residues 114–177, 178–238, and 483–546; these read KICA…RRLD, LLCA…LFAA, and DLCY…SSNV. Residues 586-683 are disordered; that stretch reads SQRKPLSVDP…SHGGSITGKS (98 aa). Residues 598–617 are compositionally biased toward polar residues; the sequence is ENVSSTVETAKQAETTASSD. Residues 642–655 are compositionally biased toward low complexity; sequence SNETQSSSNSTETS. Serine 690 is modified (phosphoserine). Residues 726–759 are disordered; the sequence is AFRHMPSYTDPSYRKNSGAIYDKNDGTQKGLTPK. Residues 837–1038 form the Rho-GAP domain; sequence VPLEILVERN…LLIENFEKFC (202 aa). 2 disordered regions span residues 1078–1097 and 1104–1150; these read LDER…RQPI and LTSD…IRDS. Residues 1088–1097 show a composition bias toward basic residues; that stretch reads ASTKRKRQPI. Polar residues predominate over residues 1104-1134; that stretch reads LTSDVPSGSEVADTNSLSSTTKDEASPNSDA.

The protein resides in the cell tip. The protein localises to the nucleus. In terms of biological role, GTPase-activating protein for Rho1. Involved in the F-actin patch localization, cell morphogenesis, regulation of septation, and cell wall synthesis. The protein is Rho-type GTPase-activating protein 1 (rga1) of Schizosaccharomyces pombe (strain 972 / ATCC 24843) (Fission yeast).